A 152-amino-acid chain; its full sequence is UPF0266 membrane protein YobD (152 aa).

3 helical membrane passes run 6–26 (LVLILFIAALLAYALYDQFIM), 45–65 (VDSVIFVGLVAILIYNNVTSH), and 67–87 (AQMTTWLLSALALMGFYIFWI).

It belongs to the UPF0266 family.

Its subcellular location is the cell inner membrane. This is UPF0266 membrane protein YobD from Salmonella choleraesuis (strain SC-B67).